The primary structure comprises 473 residues: Bifunctional protein HldE (473 aa).

A ribokinase region spans residues 1-318; it reads MKLTLPRYDQ…RAVQREEGSE (318 aa). 194–197 is a binding site for ATP; the sequence is NLHE. Aspartate 263 is an active-site residue. The tract at residues 343 to 473 is cytidylyltransferase; sequence FTNGCFDILH…TAIVEKIRNK (131 aa).

It in the N-terminal section; belongs to the carbohydrate kinase PfkB family. In the C-terminal section; belongs to the cytidylyltransferase family. Homodimer.

The enzyme catalyses D-glycero-beta-D-manno-heptose 7-phosphate + ATP = D-glycero-beta-D-manno-heptose 1,7-bisphosphate + ADP + H(+). It catalyses the reaction D-glycero-beta-D-manno-heptose 1-phosphate + ATP + H(+) = ADP-D-glycero-beta-D-manno-heptose + diphosphate. It participates in nucleotide-sugar biosynthesis; ADP-L-glycero-beta-D-manno-heptose biosynthesis; ADP-L-glycero-beta-D-manno-heptose from D-glycero-beta-D-manno-heptose 7-phosphate: step 1/4. Its pathway is nucleotide-sugar biosynthesis; ADP-L-glycero-beta-D-manno-heptose biosynthesis; ADP-L-glycero-beta-D-manno-heptose from D-glycero-beta-D-manno-heptose 7-phosphate: step 3/4. Functionally, catalyzes the phosphorylation of D-glycero-D-manno-heptose 7-phosphate at the C-1 position to selectively form D-glycero-beta-D-manno-heptose-1,7-bisphosphate. In terms of biological role, catalyzes the ADP transfer from ATP to D-glycero-beta-D-manno-heptose 1-phosphate, yielding ADP-D-glycero-beta-D-manno-heptose. The chain is Bifunctional protein HldE from Ectopseudomonas mendocina (strain ymp) (Pseudomonas mendocina).